The following is a 277-amino-acid chain: Lectin 1 (277 aa).

The N-terminal stretch at 1-30 (MSFSSSNFYVILSISLTVFILLFNINKVNS) is a signal peptide. Asparagine 143 carries N-linked (GlcNAc...) asparagine glycosylation. Positions 152 and 154 each coordinate Mn(2+). The Ca(2+) site is built by aspartate 154, asparagine 158, and aspartate 161. Residues aspartate 161 and histidine 167 each contribute to the Mn(2+) site. The N-linked (GlcNAc...) asparagine glycan is linked to asparagine 269.

The protein belongs to the leguminous lectin family.

Lectin that may be involved in a cell recognition process. This Medicago truncatula (Barrel medic) protein is Lectin 1 (LEC1).